The sequence spans 116 residues: Large ribosomal subunit protein uL18 (116 aa).

The protein belongs to the universal ribosomal protein uL18 family. In terms of assembly, part of the 50S ribosomal subunit; part of the 5S rRNA/L5/L18/L25 subcomplex. Contacts the 5S and 23S rRNAs.

In terms of biological role, this is one of the proteins that bind and probably mediate the attachment of the 5S RNA into the large ribosomal subunit, where it forms part of the central protuberance. The polypeptide is Large ribosomal subunit protein uL18 (Acholeplasma laidlawii (strain PG-8A)).